The chain runs to 550 residues: Mycosin-2 (550 aa).

Positions 1 to 33 (MASPLNRPGLRAAAASAALTLVALSANVPAAQA) are cleaved as a signal peptide. The disordered stretch occupies residues 34–62 (IPPPSVDPAMVPADARPGPDQPMRRSNSC). The Peptidase S8 domain occupies 79 to 490 (GFNLVNISKA…YGLVDPVAAL (412 aa)). Residues Asp103 and His133 each act as charge relay system in the active site. The segment covering 168–190 (PPVTAAPAPPVEVPPPMPPPPPV) has biased composition (pro residues). Residues 168–236 (PPVTAAPAPP…PPPPPGAPDG (69 aa)) are disordered. Ser435 acts as the Charge relay system in catalysis. A helical transmembrane segment spans residues 524–544 (NIAIGFVGAVATGVLAMAIGA).

Belongs to the peptidase S8 family.

It localises to the cell membrane. The chain is Mycosin-2 from Mycobacterium tuberculosis (strain ATCC 25618 / H37Rv).